Here is a 423-residue protein sequence, read N- to C-terminus: Lysosomal acid phosphatase (423 aa).

The first 30 residues, 1-30 (MAGRRFGWSRAALLQLILGVNLMVMPRTQA), serve as a signal peptide directing secretion. Residues 31–380 (RTLRFVTLLY…QLAGGPADTE (350 aa)) lie on the Lumenal side of the membrane. Residue His42 is the Nucleophile of the active site. 6 N-linked (GlcNAc...) asparagine glycosylation sites follow: Asn92, Asn133, Asn167, Asn177, Asn191, and Asn267. Cystine bridges form between Cys159–Cys370, Cys212–Cys310, and Cys345–Cys349. Asp287 (proton donor) is an active-site residue. N-linked (GlcNAc...) asparagine glycans are attached at residues Asn322 and Asn331. The chain crosses the membrane as a helical span at residues 381–401 (VIVALAVCGSILFLLIVLLLT). Residues 402–423 (VLFRVQAQPPGYRHVPDGEDHA) lie on the Cytoplasmic side of the membrane.

This sequence belongs to the histidine acid phosphatase family. The membrane-bound form is converted to the soluble form by sequential proteolytic processing. First, the C-terminal cytoplasmic tail is removed. Cleavage by a lysosomal protease releases the soluble form in the lysosome lumen.

It is found in the lysosome membrane. The protein localises to the lysosome lumen. It carries out the reaction a phosphate monoester + H2O = an alcohol + phosphate. The protein is Lysosomal acid phosphatase (ACP2) of Bos taurus (Bovine).